We begin with the raw amino-acid sequence, 206 residues long: Bacterial microcompartment protein trimer-3 (206 aa).

BMC circularly permuted domains lie at 2–104 and 105–206; these read ELRA…RLAP and RVVS…DNRG. The Pore gating residues signature appears at 67–68; it reads ER.

Belongs to the EutL/PduB family. In terms of assembly, homotrimerizes to form a pseudohexamer. These stack, with the concave faces together, with the concave faces together, in purified bacterial microcompartments (BMC).

Its subcellular location is the bacterial microcompartment. A minor component of the bacterial microcompartment (BMC) shell. Expression of 5 proteins in E.coli (BMC-H (Hoch_5815), BMC-P (Hoch_5814), and 3 BMC-T (Hoch_5812, Hoch_5816, Hoch_3341)) forms 40 nm artificial BMCs with a molecular mass of 6.5 MDa. One of 2 stacked pseudohexamers in the BMC. There are 20 BMC-T pseudohexamers per BMC, composed of mixed BMC-T1, BMC-T2 and BMC-T3. The shell facets are 20-30 Angstroms thick, with 1 of the stacked BMC-T trimers protruding to the exterior. The stacked trimers may serve as conduits to allow metabolite flux across the protein shell, gated by Arg-68 which contacts Glu-67 in an adjacent subunit; they are flexible enough to play a role in accommodating variations in shell assembly. The protein is Bacterial microcompartment protein trimer-3 of Haliangium ochraceum (strain DSM 14365 / JCM 11303 / SMP-2).